We begin with the raw amino-acid sequence, 210 residues long: MATRIENKKLSKSSSAWMKEHIDDHYVQKAQKDGYRARAAYKLLEINEKTNLIKKGMTVVDLGSAPGSWSQVAGHLVGEKGILIASDILPMDTLPDVTFIQGDFREPEVFDRIMAEVGDRQVDVVLSDMAPNTAGNSAIDQPRMMYLCELAVDFALATLPEGGALIMKVFQGEGTQELRKQMQADFSKIRSIKPGASRPRSKEIFWIAIK.

Gly-67, Trp-69, Asp-87, Asp-103, and Asp-128 together coordinate S-adenosyl-L-methionine. The active-site Proton acceptor is the Lys-168.

Belongs to the class I-like SAM-binding methyltransferase superfamily. RNA methyltransferase RlmE family.

Its subcellular location is the cytoplasm. The enzyme catalyses uridine(2552) in 23S rRNA + S-adenosyl-L-methionine = 2'-O-methyluridine(2552) in 23S rRNA + S-adenosyl-L-homocysteine + H(+). In terms of biological role, specifically methylates the uridine in position 2552 of 23S rRNA at the 2'-O position of the ribose in the fully assembled 50S ribosomal subunit. The protein is Ribosomal RNA large subunit methyltransferase E of Psychrobacter cryohalolentis (strain ATCC BAA-1226 / DSM 17306 / VKM B-2378 / K5).